We begin with the raw amino-acid sequence, 124 residues long: S-adenosylmethionine decarboxylase proenzyme (124 aa).

Ser71 (schiff-base intermediate with substrate; via pyruvic acid) is an active-site residue. At Ser71 the chain carries Pyruvic acid (Ser); by autocatalysis. His76 (proton acceptor; for processing activity) is an active-site residue. The Proton donor; for catalytic activity role is filled by Cys91.

Belongs to the prokaryotic AdoMetDC family. Type 1 subfamily. In terms of assembly, heterotetramer of two alpha and two beta chains arranged as a dimer of alpha/beta heterodimers. The cofactor is pyruvate. Is synthesized initially as an inactive proenzyme. Formation of the active enzyme involves a self-maturation process in which the active site pyruvoyl group is generated from an internal serine residue via an autocatalytic post-translational modification. Two non-identical subunits are generated from the proenzyme in this reaction, and the pyruvate is formed at the N-terminus of the alpha chain, which is derived from the carboxyl end of the proenzyme. The post-translation cleavage follows an unusual pathway, termed non-hydrolytic serinolysis, in which the side chain hydroxyl group of the serine supplies its oxygen atom to form the C-terminus of the beta chain, while the remainder of the serine residue undergoes an oxidative deamination to produce ammonia and the pyruvoyl group blocking the N-terminus of the alpha chain.

It catalyses the reaction S-adenosyl-L-methionine + H(+) = S-adenosyl 3-(methylsulfanyl)propylamine + CO2. It functions in the pathway amine and polyamine biosynthesis; S-adenosylmethioninamine biosynthesis; S-adenosylmethioninamine from S-adenosyl-L-methionine: step 1/1. Competitively inhibited by methylglyoxal bis-guanylhydrazone. Irreversibly inhibited by NaBH(4) in vitro. In terms of biological role, catalyzes the decarboxylation of S-adenosylmethionine to S-adenosylmethioninamine (dcAdoMet), the propylamine donor required for the synthesis of the polyamines spermine and spermidine from the diamine putrescine. Has no arginine decarboxylase (ArgDC) activity. The protein is S-adenosylmethionine decarboxylase proenzyme (speH) of Saccharolobus solfataricus (strain ATCC 35092 / DSM 1617 / JCM 11322 / P2) (Sulfolobus solfataricus).